A 226-amino-acid chain; its full sequence is Lipoprotein-releasing system ATP-binding protein LolD 1 (226 aa).

Positions 5–225 constitute an ABC transporter domain; sequence LKLDGIRKSY…IVRVVDGKIA (221 aa). 42-49 contacts ATP; that stretch reads GPSGSGKS.

The protein belongs to the ABC transporter superfamily. Lipoprotein translocase (TC 3.A.1.125) family. In terms of assembly, the complex is composed of two ATP-binding proteins (LolD) and two transmembrane proteins (LolC and LolE).

It localises to the cell inner membrane. In terms of biological role, part of the ABC transporter complex LolCDE involved in the translocation of mature outer membrane-directed lipoproteins, from the inner membrane to the periplasmic chaperone, LolA. Responsible for the formation of the LolA-lipoprotein complex in an ATP-dependent manner. The sequence is that of Lipoprotein-releasing system ATP-binding protein LolD 1 from Rhodopseudomonas palustris (strain ATCC BAA-98 / CGA009).